A 250-amino-acid polypeptide reads, in one-letter code: Isoprenyl transferase (250 aa).

Aspartate 27 is an active-site residue. Aspartate 27 is a Mg(2+) binding site. Residues glycine 28–arginine 31, tryptophan 32, histidine 48, and serine 76–glutamate 78 contribute to the substrate site. Asparagine 79 (proton acceptor) is an active-site residue. Substrate is bound by residues phenylalanine 80, arginine 82, arginine 199, and arginine 205–serine 207. Glutamate 218 is a binding site for Mg(2+).

It belongs to the UPP synthase family. Homodimer. Mg(2+) is required as a cofactor.

Its function is as follows. Catalyzes the condensation of isopentenyl diphosphate (IPP) with allylic pyrophosphates generating different type of terpenoids. In Chlamydia abortus (strain DSM 27085 / S26/3) (Chlamydophila abortus), this protein is Isoprenyl transferase.